The primary structure comprises 2265 residues: Collagen alpha-6(VI) chain (2265 aa).

An N-terminal signal peptide occupies residues 1 to 18 (MLLVLCLTMICFHVCVNQ). The interval 19–1390 (DSGPEYADVV…TCCCLLCKCT (1372 aa)) is nonhelical region. 7 consecutive VWFA domains span residues 26–205 (DVVF…IKDV), 228–406 (DVVF…LKKL), 435–605 (DIYL…RNQV), 621–790 (DIMF…EDDL), 808–981 (DVVF…FSDV), 999–1170 (DLVF…KKRI), and 1186–1378 (DVVV…INVA). N-linked (GlcNAc...) asparagine glycosylation is found at Asn-197, Asn-238, and Asn-346. N-linked (GlcNAc...) asparagine glycosylation occurs at Asn-760. The segment at 1391–1724 (GGDGAMGDPG…GRKGVKGARG (334 aa)) is triple-helical region. Residues 1398–1722 (DPGSAGKKGP…PPGRKGVKGA (325 aa)) are disordered. Residues 1455-1470 (EEGEVGEDGLDGLDGE) are compositionally biased toward acidic residues. The segment covering 1497-1507 (AAGDRGAKGLR) has biased composition (basic and acidic residues). The Cell attachment site motif lies at 1507–1509 (RGD). Residues 1546–1558 (SRRKMVVHGRRGH) are compositionally biased toward basic residues. Residues 1725 to 2265 (LASFSTCDLI…ATSKLGKRSA (541 aa)) form a nonhelical region region. VWFA domains are found at residues 1756–1936 (ELVF…ERLQ) and 1964–2165 (DTAF…INSI). The segment at 2186–2205 (SRDLKPPPRQFRSFVPGPQK) is disordered.

This sequence belongs to the type VI collagen family. Trimers composed of three different chains: alpha-1(VI), alpha-2(VI), and alpha-3(VI) or alpha-4(VI) or alpha-5(VI) or alpha-6(VI). Prolines at the third position of the tripeptide repeating unit (G-X-Y) are hydroxylated in some or all of the chains. In terms of tissue distribution, in newborn, it is expressed in lung, heart, kidney, muscle, brain, intestine, skin, femur and sternum. In adult, it is expressed in lung, heart, muscle, ovary, brain, liver and sternum.

It is found in the secreted. The protein localises to the extracellular space. The protein resides in the extracellular matrix. Functionally, collagen VI acts as a cell-binding protein. In Mus musculus (Mouse), this protein is Collagen alpha-6(VI) chain (Col6a6).